The primary structure comprises 341 residues: Tetraacyldisaccharide 4'-kinase (341 aa).

An ATP-binding site is contributed by 64 to 71 (AVGGSGKT).

This sequence belongs to the LpxK family.

It carries out the reaction a lipid A disaccharide + ATP = a lipid IVA + ADP + H(+). It functions in the pathway glycolipid biosynthesis; lipid IV(A) biosynthesis; lipid IV(A) from (3R)-3-hydroxytetradecanoyl-[acyl-carrier-protein] and UDP-N-acetyl-alpha-D-glucosamine: step 6/6. In terms of biological role, transfers the gamma-phosphate of ATP to the 4'-position of a tetraacyldisaccharide 1-phosphate intermediate (termed DS-1-P) to form tetraacyldisaccharide 1,4'-bis-phosphate (lipid IVA). This chain is Tetraacyldisaccharide 4'-kinase, found in Azoarcus sp. (strain BH72).